The chain runs to 220 residues: Adapter protein MecA (220 aa).

Belongs to the MecA family. In terms of assembly, homodimer.

In terms of biological role, enables the recognition and targeting of unfolded and aggregated proteins to the ClpC protease or to other proteins involved in proteolysis. This is Adapter protein MecA from Enterococcus faecalis (strain ATCC 700802 / V583).